Reading from the N-terminus, the 220-residue chain is Protein Syd (220 aa).

Belongs to the Syd family.

The protein resides in the cell inner membrane. Functionally, interacts with the SecY protein in vivo. May bind preferentially to an uncomplexed state of SecY, thus functioning either as a chelating agent for excess SecY in the cell or as a regulatory factor that negatively controls the translocase function. This Shewanella loihica (strain ATCC BAA-1088 / PV-4) protein is Protein Syd.